Consider the following 135-residue polypeptide: Interleukin-4 (135 aa).

An N-terminal signal peptide occupies residues 1 to 24 (MGLTYQLIPVLVCLLVCTSHFVHG). 3 disulfides stabilise this stretch: C27–C135, C48–C85, and C70–C105. N62 carries N-linked (GlcNAc...) asparagine glycosylation.

The protein belongs to the IL-4/IL-13 family.

Its subcellular location is the secreted. In terms of biological role, participates in at least several B-cell activation processes as well as of other cell types. It is a costimulator of DNA-synthesis. It induces the expression of class II MHC molecules on resting B-cells. It enhances both secretion and cell surface expression of IgE and IgG1. It also regulates the expression of the low affinity Fc receptor for IgE (CD23) on both lymphocytes and monocytes. Positively regulates IL31RA expression in macrophages. Stimulates autophagy in dendritic cells by interfering with mTORC1 signaling and through the induction of RUFY4. This is Interleukin-4 (IL4) from Bubalus carabanensis (Swamp type water buffalo).